Consider the following 599-residue polypeptide: Elongation factor 4 (599 aa).

The region spanning Lys2–Glu184 is the tr-type G domain. Residues Asp14–Thr19 and Asn131–Asp134 each bind GTP.

Belongs to the TRAFAC class translation factor GTPase superfamily. Classic translation factor GTPase family. LepA subfamily.

It is found in the cell inner membrane. It carries out the reaction GTP + H2O = GDP + phosphate + H(+). Functionally, required for accurate and efficient protein synthesis under certain stress conditions. May act as a fidelity factor of the translation reaction, by catalyzing a one-codon backward translocation of tRNAs on improperly translocated ribosomes. Back-translocation proceeds from a post-translocation (POST) complex to a pre-translocation (PRE) complex, thus giving elongation factor G a second chance to translocate the tRNAs correctly. Binds to ribosomes in a GTP-dependent manner. This chain is Elongation factor 4, found in Escherichia coli (strain SE11).